A 176-amino-acid chain; its full sequence is Transmembrane protein 238 (176 aa).

The tract at residues 1–21 is disordered; that stretch reads MAAASPVCGSQASAVGASSPP. Residues 1-36 are Cytoplasmic-facing; it reads MAAASPVCGSQASAVGASSPPAPAPAPAAGLGRCRM. The span at 9–19 shows a compositional bias: low complexity; sequence GSQASAVGASS. The chain crosses the membrane as a helical span at residues 37–57; that stretch reads ALLLAVALDVAGMAALLTGVF. The Extracellular segment spans residues 58-69; that stretch reads AQLQVRGRDFGD. The chain crosses the membrane as a helical span at residues 70 to 90; that stretch reads LLIYSGALLVFLSLLGWILWY. The Cytoplasmic segment spans residues 91-176; sequence TGNIEISRQE…GSVAAGTGSE (86 aa). The segment covering 124 to 135 has biased composition (low complexity); that stretch reads SAPATASPRTTA. Residues 124–156 are disordered; it reads SAPATASPRTTAGLRSARRANRAPQPSSSGSRR. Position 175 is a phosphoserine (serine 175).

Its subcellular location is the membrane. The polypeptide is Transmembrane protein 238 (Tmem238) (Mus musculus (Mouse)).